A 264-amino-acid polypeptide reads, in one-letter code: Thymidylate synthase (264 aa).

Arginine 21 is a dUMP binding site. Histidine 51 contacts (6R)-5,10-methylene-5,6,7,8-tetrahydrofolate. DUMP is bound at residue 126–127; it reads RR. Cysteine 146 acts as the Nucleophile in catalysis. DUMP is bound by residues 166 to 169, asparagine 177, and 207 to 209; these read RSCD and HLY. Aspartate 169 contacts (6R)-5,10-methylene-5,6,7,8-tetrahydrofolate. Alanine 263 is a binding site for (6R)-5,10-methylene-5,6,7,8-tetrahydrofolate.

This sequence belongs to the thymidylate synthase family. Bacterial-type ThyA subfamily. In terms of assembly, homodimer.

Its subcellular location is the cytoplasm. The catalysed reaction is dUMP + (6R)-5,10-methylene-5,6,7,8-tetrahydrofolate = 7,8-dihydrofolate + dTMP. The protein operates within pyrimidine metabolism; dTTP biosynthesis. Functionally, catalyzes the reductive methylation of 2'-deoxyuridine-5'-monophosphate (dUMP) to 2'-deoxythymidine-5'-monophosphate (dTMP) while utilizing 5,10-methylenetetrahydrofolate (mTHF) as the methyl donor and reductant in the reaction, yielding dihydrofolate (DHF) as a by-product. This enzymatic reaction provides an intracellular de novo source of dTMP, an essential precursor for DNA biosynthesis. The protein is Thymidylate synthase of Enterobacter sp. (strain 638).